The sequence spans 496 residues: MLQPINVSMESLNLITLAPMLVAIAGGLIILILDLINKNLHKSLYVMLTILILVIDFGATLGLNVNERGFFDVMLIDGVSIVSQLLIIVASILFTPLALTSKRFHEYSYPEFFALFLFMVAGFQFMVASDNLILIFVGLETASLSLYTLIALHNRSNSYEAAVKYFTMGALAAAFFAMGSAVIYALTGSIELYRVADVLAARMGETGLMIAIFGSSVLLLVAFAFKLSLFPFHTWAPDVYEGASAPLAGYMSVVPKVAAFVVSIRIFGMYIDLGVEWVRVVILVLAVLTMTLANLMALVQEDVKRMLAYSSISHAGFIIAALALDTTEGTTAIFFYYGLFMFTNLGAFAMLWMSRHKNRRFNARFDHPYEKFAGFIKIMPMGAVIMAIFMLSLAGVPPFSIFWGKIYVMQAAVNSGYVWLAIVMGLNSAIAAYYYLKLVVYMFLKDPVKDVDTVYYNLSKPLMAVVGFAAVATIAAIFYVQPLVSYIYYMISASGY.

14 helical membrane-spanning segments follow: residues 12–32, 43–63, 79–99, 108–128, 132–152, 166–186, 207–227, 257–277, 280–300, 306–326, 333–353, 383–403, 416–436, and 464–484; these read LNLITLAPMLVAIAGGLIILI, SLYVMLTILILVIDFGATLGL, VSIVSQLLIIVASILFTPLAL, SYPEFFALFLFMVAGFQFMVA, LILIFVGLETASLSLYTLIAL, FTMGALAAAFFAMGSAVIYAL, GLMIAIFGSSVLLLVAFAFKL, VAAFVVSIRIFGMYIDLGVEW, VVILVLAVLTMTLANLMALVQ, MLAYSSISHAGFIIAALALDT, IFFYYGLFMFTNLGAFAMLWM, AVIMAIFMLSLAGVPPFSIFW, GYVWLAIVMGLNSAIAAYYYL, and AVVGFAAVATIAAIFYVQPLV.

The protein belongs to the complex I subunit 2 family. As to quaternary structure, NDH-1 is composed of 14 different subunits. Subunits NuoA, H, J, K, L, M, N constitute the membrane sector of the complex.

The protein resides in the cell inner membrane. It carries out the reaction a quinone + NADH + 5 H(+)(in) = a quinol + NAD(+) + 4 H(+)(out). Its function is as follows. NDH-1 shuttles electrons from NADH, via FMN and iron-sulfur (Fe-S) centers, to quinones in the respiratory chain. The immediate electron acceptor for the enzyme in this species is believed to be ubiquinone. Couples the redox reaction to proton translocation (for every two electrons transferred, four hydrogen ions are translocated across the cytoplasmic membrane), and thus conserves the redox energy in a proton gradient. The sequence is that of NADH-quinone oxidoreductase subunit N from Sulfurovum sp. (strain NBC37-1).